The following is a 307-amino-acid chain: Protoheme IX farnesyltransferase (307 aa).

8 consecutive transmembrane segments (helical) span residues 38–58 (NTLT…LSVL), 65–85 (FFTI…NNYI), 108–128 (PGFA…FLLL), 131–151 (PMAV…YSLW), 158–178 (LNTV…WAAI), 186–206 (IAWM…LALA), 251–271 (LGIT…VLGF), and 287–307 (FVYS…VTFF).

The protein belongs to the UbiA prenyltransferase family. Protoheme IX farnesyltransferase subfamily. In terms of assembly, interacts with CtaA.

The protein localises to the cell membrane. The enzyme catalyses heme b + (2E,6E)-farnesyl diphosphate + H2O = Fe(II)-heme o + diphosphate. It participates in porphyrin-containing compound metabolism; heme O biosynthesis; heme O from protoheme: step 1/1. Functionally, converts heme B (protoheme IX) to heme O by substitution of the vinyl group on carbon 2 of heme B porphyrin ring with a hydroxyethyl farnesyl side group. The chain is Protoheme IX farnesyltransferase from Bacillus thuringiensis (strain Al Hakam).